We begin with the raw amino-acid sequence, 263 residues long: Cytochrome c oxidase subunit 3 (263 aa).

7 helical membrane-spanning segments follow: residues 7–27, 44–64, 78–98, 120–140, 145–165, 191–211, and 241–261; these read ITVL…KAHL, FSVG…VYSI, GMLS…WGIL, LILT…CLQF, GMSL…ECFA, VTGL…IYFI, and ITIL…YFFY.

This sequence belongs to the cytochrome c oxidase subunit 3 family. As to quaternary structure, component of the cytochrome c oxidase (complex IV, CIV), a multisubunit enzyme composed of a catalytic core of 3 subunits and several supernumerary subunits. The complex exists as a monomer or a dimer and forms supercomplexes (SCs) in the inner mitochondrial membrane with ubiquinol-cytochrome c oxidoreductase (cytochrome b-c1 complex, complex III, CIII).

The protein resides in the mitochondrion inner membrane. The enzyme catalyses 4 Fe(II)-[cytochrome c] + O2 + 8 H(+)(in) = 4 Fe(III)-[cytochrome c] + 2 H2O + 4 H(+)(out). In terms of biological role, component of the cytochrome c oxidase, the last enzyme in the mitochondrial electron transport chain which drives oxidative phosphorylation. The respiratory chain contains 3 multisubunit complexes succinate dehydrogenase (complex II, CII), ubiquinol-cytochrome c oxidoreductase (cytochrome b-c1 complex, complex III, CIII) and cytochrome c oxidase (complex IV, CIV), that cooperate to transfer electrons derived from NADH and succinate to molecular oxygen, creating an electrochemical gradient over the inner membrane that drives transmembrane transport and the ATP synthase. Cytochrome c oxidase is the component of the respiratory chain that catalyzes the reduction of oxygen to water. Electrons originating from reduced cytochrome c in the intermembrane space (IMS) are transferred via the dinuclear copper A center (CU(A)) of subunit 2 and heme A of subunit 1 to the active site in subunit 1, a binuclear center (BNC) formed by heme A3 and copper B (CU(B)). The BNC reduces molecular oxygen to 2 water molecules using 4 electrons from cytochrome c in the IMS and 4 protons from the mitochondrial matrix. The protein is Cytochrome c oxidase subunit 3 (COIII) of Plasmodium vivax.